The following is a 23-amino-acid chain: Cytochrome c oxidase subunit 7A1, mitochondrial (23 aa).

The protein belongs to the cytochrome c oxidase VIIa family. As to quaternary structure, component of the complex IV (CIV, cytochrome c oxidase), a multisubunit enzyme composed of 14 subunits. The complex is composed of a catalytic core of 3 subunits MT-CO1, MT-CO2 and MT-CO3, encoded in the mitochondrial DNA, and 11 supernumerary subunits COX4I1 (or COX4I2), COX5A, COX5B, COX6A2 (or COX6A1), COX6B1 (or COX6B2), COX6C, COX7A1 (or COX7A2), COX7B, COX7C, COX8B and NDUFA4, which are encoded in the nuclear genome. The complex exists as a monomer or a dimer and forms supercomplexes (SCs) in the inner mitochondrial membrane with NADH-ubiquinone oxidoreductase (complex I, CI) and ubiquinol-cytochrome c oxidoreductase (cytochrome b-c1 complex, complex III, CIII), resulting in different assemblies (supercomplex SCI(1)III(2)IV(1) and megacomplex MCI(2)III(2)IV(2)).

Its subcellular location is the mitochondrion inner membrane. It functions in the pathway energy metabolism; oxidative phosphorylation. Its function is as follows. Component of the mitochondrial respiratory complex IV (CIV, also named cytochrome c oxidase complex), the last enzyme in the mitochondrial electron transport chain which drives oxidative phosphorylation. The CIV complex is the component of the respiratory chain that catalyzes the reduction of oxygen to water. Acts as an assembly factor that specifically drives the homodimerization of CIV complexes, mediating the formation of mitochondrial respiratory supercomplexes (respirasomes) containing two CIV: supercomplxes with two molecules of CIV show improved activity. Despite being highly expressed in brown adipose tissue, not required for thermogenesis. This chain is Cytochrome c oxidase subunit 7A1, mitochondrial (COX7A1), found in Canis lupus familiaris (Dog).